A 321-amino-acid chain; its full sequence is Cytochrome f (321 aa).

The N-terminal stretch at 1 to 38 (MKKNFYTISKTMSRSLKLILFSVFIGFSIFLIPQPTWA) is a signal peptide. Heme is bound by residues Y39, C59, C62, and H63. Residues 288–308 (VIGMIIFFIGVGLSQIMLVLK) form a helical membrane-spanning segment.

This sequence belongs to the cytochrome f family. The 4 large subunits of the cytochrome b6-f complex are cytochrome b6, subunit IV (17 kDa polypeptide, PetD), cytochrome f and the Rieske protein, while the 4 small subunits are PetG, PetL, PetM and PetN. The complex functions as a dimer. Requires heme as cofactor.

Its subcellular location is the cellular thylakoid membrane. In terms of biological role, component of the cytochrome b6-f complex, which mediates electron transfer between photosystem II (PSII) and photosystem I (PSI), cyclic electron flow around PSI, and state transitions. This is Cytochrome f from Prochlorococcus marinus (strain NATL1A).